A 172-amino-acid chain; its full sequence is MAARLWAAAVAPATLNPPLLTLSASSSPSSSRLRRSVLGRLRSRAPRPADFVCRRAKNAAYDDYKFPDPIPEFAAQETSKFKEHMMWRLEQKKDDYFGEHVEEIVDVCTEILGTFLEHDYCGPGTLLVHPFLDMKGEIKERGLPGAPQAARAAIAWAEKNIDKDWKAWTGEY.

Residues 1–54 constitute a chloroplast transit peptide; sequence MAARLWAAAVAPATLNPPLLTLSASSSPSSSRLRRSVLGRLRSRAPRPADFVCR.

The protein resides in the plastid. The protein localises to the chloroplast stroma. It localises to the chloroplast nucleoid. Required for the activity of the plastid-encoded RNA polymerase (PEP) and full expression of genes transcribed by PEP. This chain is Protein PLASTID REDOX INSENSITIVE 2, chloroplastic, found in Oryza sativa subsp. japonica (Rice).